A 76-amino-acid polypeptide reads, in one-letter code: Small ribosomal subunit protein uS17 (76 aa).

This sequence belongs to the universal ribosomal protein uS17 family. As to quaternary structure, part of the 30S ribosomal subunit.

One of the primary rRNA binding proteins, it binds specifically to the 5'-end of 16S ribosomal RNA. The chain is Small ribosomal subunit protein uS17 from Dinoroseobacter shibae (strain DSM 16493 / NCIMB 14021 / DFL 12).